Consider the following 701-residue polypeptide: Probable cytosolic oligopeptidase A (701 aa).

Residue Ala-2 is modified to N-acetylalanine. Residues 148–194 (IALEDDKREEFNKIEQELEKLSHKFSENVLDATKKFEKLITDKKEIE) adopt a coiled-coil conformation. His-483 serves as a coordination point for Zn(2+). Glu-484 is a catalytic residue. Zn(2+) contacts are provided by His-487 and Glu-513. 615–621 (HIFAGGY) is a substrate binding site.

It belongs to the peptidase M3 family. Zn(2+) serves as cofactor.

It localises to the cytoplasm. The protein resides in the cytosol. It carries out the reaction Hydrolysis of oligopeptides, with broad specificity. Gly or Ala commonly occur as P1 or P1' residues, but more distant residues are also important, as is shown by the fact that Z-Gly-Pro-Gly-|-Gly-Pro-Ala is cleaved, but not Z-(Gly)(5).. With respect to regulation, inhibited by salicylic acid. Functionally, oligopeptidase that may be involved in the degradation of proteasome-generated peptides. Binds salicylic acid. In Arabidopsis thaliana (Mouse-ear cress), this protein is Probable cytosolic oligopeptidase A.